A 459-amino-acid polypeptide reads, in one-letter code: Bifunctional protein GlmU (459 aa).

The tract at residues 1-230 is pyrophosphorylase; sequence MSNRFAVILA…FDETLGVNDR (230 aa). UDP-N-acetyl-alpha-D-glucosamine-binding positions include 9–12, K23, Q73, and 78–79; these read LAAG and GT. D103 contacts Mg(2+). Residues G140, E155, N170, and N228 each coordinate UDP-N-acetyl-alpha-D-glucosamine. N228 contributes to the Mg(2+) binding site. Positions 231–251 are linker; that stretch reads VALSQAEIIMKNRINRKNMVN. Residues 252–459 form an N-acetyltransferase region; it reads GVTIIDPSNT…VDQLLNKKKS (208 aa). R333 and K351 together coordinate UDP-N-acetyl-alpha-D-glucosamine. The Proton acceptor role is filled by H363. UDP-N-acetyl-alpha-D-glucosamine contacts are provided by Y366 and N377. Residues 386–387, A423, and R440 each bind acetyl-CoA; that span reads NY.

The protein in the N-terminal section; belongs to the N-acetylglucosamine-1-phosphate uridyltransferase family. This sequence in the C-terminal section; belongs to the transferase hexapeptide repeat family. Homotrimer. The cofactor is Mg(2+).

It is found in the cytoplasm. It carries out the reaction alpha-D-glucosamine 1-phosphate + acetyl-CoA = N-acetyl-alpha-D-glucosamine 1-phosphate + CoA + H(+). It catalyses the reaction N-acetyl-alpha-D-glucosamine 1-phosphate + UTP + H(+) = UDP-N-acetyl-alpha-D-glucosamine + diphosphate. The protein operates within nucleotide-sugar biosynthesis; UDP-N-acetyl-alpha-D-glucosamine biosynthesis; N-acetyl-alpha-D-glucosamine 1-phosphate from alpha-D-glucosamine 6-phosphate (route II): step 2/2. Its pathway is nucleotide-sugar biosynthesis; UDP-N-acetyl-alpha-D-glucosamine biosynthesis; UDP-N-acetyl-alpha-D-glucosamine from N-acetyl-alpha-D-glucosamine 1-phosphate: step 1/1. It functions in the pathway bacterial outer membrane biogenesis; LPS lipid A biosynthesis. Catalyzes the last two sequential reactions in the de novo biosynthetic pathway for UDP-N-acetylglucosamine (UDP-GlcNAc). The C-terminal domain catalyzes the transfer of acetyl group from acetyl coenzyme A to glucosamine-1-phosphate (GlcN-1-P) to produce N-acetylglucosamine-1-phosphate (GlcNAc-1-P), which is converted into UDP-GlcNAc by the transfer of uridine 5-monophosphate (from uridine 5-triphosphate), a reaction catalyzed by the N-terminal domain. The protein is Bifunctional protein GlmU of Bacillus cereus (strain ATCC 14579 / DSM 31 / CCUG 7414 / JCM 2152 / NBRC 15305 / NCIMB 9373 / NCTC 2599 / NRRL B-3711).